The sequence spans 559 residues: MNNNIVNLVAAIVLSLGIIFGWQYFIVKPQQQKQQQQIALQKAKDLKKKESAQLEATPVIVQEASQAPRIKIDSNALSGSISLKGLRFDDLILKKYKQDLSENSPEVVLFSPSDTKDAYFAEIGWVSNLSSVKLPNNETIWNSDSEILTPEKPVNLFWVNEDGVKFLVAITVDENYLFTIEQTIVNNSNQELPVQSYGLINRKYTAVEKAVNILHQGPIGCIDENLKEYSYDDIKDKKSEKFSASKVDWIGITDKYWLTSLIPDKSSNYSSNFNYAVKQEVERYQVDFISPVQIVKPGENFSIKGRLFAGAKKVDLLDKYEKQYDIKLFDRAIDFGWFYIITKPVFYAMNFFYKYVGNFGISILIVTVIIKLLMFTLANKSYRSMKRMKNLQPEINRIKNLYGDDKARLNQEIMALYKKEKVNPVAGCLPILVQIPVFFSIYKVLYVTIEMRQAPFYGWIKDLSAPDPTSIFNLFGLLHFSLPSFLMIGAWPILMAITMFLQQRMSPEPADPVQAQVMKFMPLVFLVMFSSFPAGLLIYWSWNNILSIIQQYYINKLDK.

The next 6 helical transmembrane spans lie at I5 to F25, A332 to F352, Y355 to F375, L429 to I449, L474 to L494, and F520 to W540.

Belongs to the OXA1/ALB3/YidC family. Type 1 subfamily. Interacts with the Sec translocase complex via SecD. Specifically interacts with transmembrane segments of nascent integral membrane proteins during membrane integration.

The protein resides in the cell inner membrane. Required for the insertion and/or proper folding and/or complex formation of integral membrane proteins into the membrane. Involved in integration of membrane proteins that insert both dependently and independently of the Sec translocase complex, as well as at least some lipoproteins. Aids folding of multispanning membrane proteins. This is Membrane protein insertase YidC from Rickettsia bellii (strain OSU 85-389).